Consider the following 368-residue polypeptide: Ankyrin repeat domain-containing protein 40 (368 aa).

Met1 is modified (N-acetylmethionine). 2 ANK repeats span residues 9 to 38 and 43 to 72; these read EQQERLREAAALGDIREVQKLVESGVDVNS and NGWTCLHWACKRNHGQVVSYLLKSGADKEI. Disordered stretches follow at residues 93–115, 139–176, and 196–238; these read MGVEEEDDDDDDDDNLPQLKKES, DSAQMQNGGPSTPPASPPADGSPPLLPPGEPPLLGTFP, and ILRT…NGTY. Residues 95–107 show a composition bias toward acidic residues; it reads VEEEDDDDDDDDN. Over residues 149–169 the composition is skewed to pro residues; that stretch reads STPPASPPADGSPPLLPPGEP. A compositionally biased stretch (polar residues) spans 212-224; sequence PVSQSRSLFSSVP.

This Homo sapiens (Human) protein is Ankyrin repeat domain-containing protein 40 (ANKRD40).